A 292-amino-acid polypeptide reads, in one-letter code: tRNA-splicing endonuclease (292 aa).

Active-site residues include Tyr231, His238, and Lys267.

Belongs to the tRNA-intron endonuclease family. Archaeal long subfamily. In terms of assembly, homodimer.

It carries out the reaction pretRNA = a 3'-half-tRNA molecule with a 5'-OH end + a 5'-half-tRNA molecule with a 2',3'-cyclic phosphate end + an intron with a 2',3'-cyclic phosphate and a 5'-hydroxyl terminus.. Endonuclease that removes tRNA introns. Cleaves pre-tRNA at the 5'- and 3'-splice sites to release the intron. The products are an intron and two tRNA half-molecules bearing 2',3' cyclic phosphate and 5'-OH termini. Recognizes a pseudosymmetric substrate in which 2 bulged loops of 3 bases are separated by a stem of 4 bp. In Thermoplasma volcanium (strain ATCC 51530 / DSM 4299 / JCM 9571 / NBRC 15438 / GSS1), this protein is tRNA-splicing endonuclease.